Here is a 40-residue protein sequence, read N- to C-terminus: Photosystem II reaction center protein J (40 aa).

Residues 8 to 28 (IPLWLVATVAGLAAIGVLGIF) form a helical membrane-spanning segment.

The protein belongs to the PsbJ family. In terms of assembly, PSII is composed of 1 copy each of membrane proteins PsbA, PsbB, PsbC, PsbD, PsbE, PsbF, PsbH, PsbI, PsbJ, PsbK, PsbL, PsbM, PsbT, PsbX, PsbY, PsbZ, Psb30/Ycf12, at least 3 peripheral proteins of the oxygen-evolving complex and a large number of cofactors. It forms dimeric complexes.

The protein localises to the plastid. It localises to the cyanelle thylakoid membrane. Its function is as follows. One of the components of the core complex of photosystem II (PSII). PSII is a light-driven water:plastoquinone oxidoreductase that uses light energy to abstract electrons from H(2)O, generating O(2) and a proton gradient subsequently used for ATP formation. It consists of a core antenna complex that captures photons, and an electron transfer chain that converts photonic excitation into a charge separation. The protein is Photosystem II reaction center protein J of Cyanophora paradoxa.